The primary structure comprises 153 residues: MAKITGNLVATGLKFGIVTARFNDFINDKLLSGAIDTLVRHGADENNIDTAWVPGAFEIPLVAKKMATSGKYDAVICLGTVIRGSTTHYDYVCNEAAKGIGAVALETGVPVIFGVLTTENIEQAIERAGTKAGNKGSECALGAIEMVNVLKAI.

Residues Phe-22, 56–58 (AFE), and 80–82 (TVI) contribute to the 5-amino-6-(D-ribitylamino)uracil site. Residue 85–86 (ST) coordinates (2S)-2-hydroxy-3-oxobutyl phosphate. The active-site Proton donor is the His-88. Residue Phe-113 participates in 5-amino-6-(D-ribitylamino)uracil binding. (2S)-2-hydroxy-3-oxobutyl phosphate is bound at residue Arg-127.

The protein belongs to the DMRL synthase family. Forms an icosahedral capsid composed of 60 subunits, arranged as a dodecamer of pentamers.

The enzyme catalyses (2S)-2-hydroxy-3-oxobutyl phosphate + 5-amino-6-(D-ribitylamino)uracil = 6,7-dimethyl-8-(1-D-ribityl)lumazine + phosphate + 2 H2O + H(+). It functions in the pathway cofactor biosynthesis; riboflavin biosynthesis; riboflavin from 2-hydroxy-3-oxobutyl phosphate and 5-amino-6-(D-ribitylamino)uracil: step 1/2. In terms of biological role, catalyzes the formation of 6,7-dimethyl-8-ribityllumazine by condensation of 5-amino-6-(D-ribitylamino)uracil with 3,4-dihydroxy-2-butanone 4-phosphate. This is the penultimate step in the biosynthesis of riboflavin. The polypeptide is 6,7-dimethyl-8-ribityllumazine synthase (Actinobacillus pleuropneumoniae serotype 7 (strain AP76)).